We begin with the raw amino-acid sequence, 1044 residues long: Outer dynein arm-docking complex subunit 2 (1044 aa).

Composition is skewed to basic and acidic residues over residues 317 to 338 and 379 to 401; these read IKFSEQPQKDQPNEAPKEEVAI and SKDRNTLRDTQVEKHGGKLEKSR. Disordered regions lie at residues 317–409 and 423–446; these read IKFS…PGRA and ISDSSSESEEDEEQPDHRQEANAD. 5 HEAT repeats span residues 448-485, 487-527, 530-568, 627-665, and 668-706; these read PSEYWQIQKLVKYLKGGNQTATVIALCSMKDFNLAQET, QLAI…NPQI, NIVDLGGLPVMVNILDSPHKSLKCLAAETIANVAKFRRA, AIRKAGGIPLLARLLKTSHENMLIPVVGTLQECASEENY, and AIKAERIIENLVKNLNSENEQLQEHCAMAIYQCAEDEET. ARM repeat units lie at residues 484–523, 525–564, 535–577, 622–661, 663–702, 746–785, 828–867, 871–910, 912–951, 953–992, and 1004–1031; these read ETCQLAIRDVGGLEVLINLLETDEVKCKIGSLKILKEISH, PQIRRNIVDLGGLPVMVNILDSPHKSLKCLAAETIANVAK, GGLP…RHGG, YANKEAIRKAGGIPLLARLLKTSHENMLIPVVGTLQECAS, ENYRAAIKAERIIENLVKNLNSENEQLQEHCAMAIYQCAE, KENVTKFREYKAIETLVGLLTDQPEEVLVNVVGALGECCQ, PESMMIIDRLDGVRLLWSLLKNPHPDVKASAAWALCPCIQ, DAGEMVRSFVGGLELVVNLLKSDNKEVLASVCAVITNIAK, QENLAVITDHGVVPLLSKLANTNNDKLRRHLAETISRCCM, GRNRVAFGEHKAVAPLVRYLKSNDTNVHRATAQALYQLSE, and GAVKLLLDMVGSPDEELQEAAAGCISNI. HEAT repeat units follow at residues 831–870, 874–914, 916–955, 958–996, and 999–1037; these read MMIIDRLDGVRLLWSLLKNPHPDVKASAAWALCPCIQNAK, EMVR…DQEN, AVITDHGVVPLLSKLANTNNDKLRRHLAETISRCCMWGRN, AFGEHKAVAPLVRYLKSNDTNVHRATAQALYQLSEDADN, and TMHENGAVKLLLDMVGSPDEELQEAAAGCISNIRRLALA.

In terms of assembly, component of the outer dynein arm-docking complex along with ODAD1, ODAD3, ODAD4 and CLXN. Interacts with CFAP61. In terms of tissue distribution, expressed in trachea multiciliated cells.

It is found in the cytoplasm. Its subcellular location is the cytoskeleton. The protein resides in the cilium axoneme. The protein localises to the cilium basal body. In terms of biological role, component of the outer dynein arm-docking complex (ODA-DC) that mediates outer dynein arms (ODA) binding onto the doublet microtubule. Involved in mediating assembly of both ODAs and their axonemal docking complex onto ciliary microtubules. This is Outer dynein arm-docking complex subunit 2 (ODAD2) from Bos taurus (Bovine).